A 789-amino-acid chain; its full sequence is Phenylalanine--tRNA ligase beta subunit (789 aa).

In terms of domain architecture, tRNA-binding spans 38–151 (KKHLQSFVVV…NTYNVGESFF (114 aa)). A B5 domain is found at 398–474 (HNDILLNFSP…RLYGYDKILE (77 aa)). Positions 452, 458, 461, and 462 each coordinate Mg(2+). In terms of domain architecture, FDX-ACB spans 694 to 787 (LRYQSVKRDF…ISKGFNGILR (94 aa)).

The protein belongs to the phenylalanyl-tRNA synthetase beta subunit family. Type 1 subfamily. As to quaternary structure, tetramer of two alpha and two beta subunits. Requires Mg(2+) as cofactor.

The protein resides in the cytoplasm. The enzyme catalyses tRNA(Phe) + L-phenylalanine + ATP = L-phenylalanyl-tRNA(Phe) + AMP + diphosphate + H(+). The chain is Phenylalanine--tRNA ligase beta subunit from Ehrlichia ruminantium (strain Gardel).